The sequence spans 60 residues: Large ribosomal subunit protein uL30 (60 aa).

The protein belongs to the universal ribosomal protein uL30 family. As to quaternary structure, part of the 50S ribosomal subunit.

The protein is Large ribosomal subunit protein uL30 of Shewanella loihica (strain ATCC BAA-1088 / PV-4).